An 863-amino-acid polypeptide reads, in one-letter code: MKALRRFTVRAHLPERLAALDQLSTNLRWSWDKPTQDLFAAIDPALWEQCGHDPVALLGAVNPARLDELALDAEFLGALDELAADLNDYLSRPLWYQEQQDAGVAAQALPTGIAYFSLEFGVAEVLPNYSGGLGILAGDHLKSASDLGVPLIAVGLYYRSGYFRQSLTADGWQHETYPSLDPQGLPLRLLTDANGDPVLVEVALGDNAVLRARIWVAQVGRVPLLLLDSDIPENEHDLRNVTDRLYGGDQEHRIKQEILAGIGGVRAIRAYTAVEKLTPPEVFHMNEGHAGFLGIERIRELVTDAGLDFDTALTVVRSSTVFTTHTPVPAGIDRFPLEMVQRYVNDQRGDGRSRLLPGLPADRIVALGAEDDPAKFNMAHMGLRLAQRANGVSLLHGRVSRAMFNELWAGFDPDEVPIGSVTNGVHAPTWAAPQWLQLGRELAGSDSLREPVVWQRLHQVDPAHLWWIRSQLRSMLVEDVRARLRQSWLERGATDAELGWIATAFDPNVLTVGFARRVPTYKRLTLMLRDPGRLEQLLLDEQRPIQLIVAGKSHPADDGGKALIQQVVRFADRPQFRHRIAFLPNYDMSMARLLYWGCDVWLNNPLRPLEACGTSGMKSALNGGLNLSIRDGWWDEWYDGENGWEIPSADGVADENRRDDLEAGALYDLLAQAVAPKFYERDERGVPQRWVEMVRHTLQTLGPKVLASRMVRDYVEHYYAPAAQSFRRTAGAQFDAARELADYRRRAEEAWPKIEIADVDSTGLPDTPLLGSQLTLTATVRLAGLRPNDVTVQGVLGRVDSGDVLMDPVTVEMAHTGTGDGGYEIFSTTTPLPLAGPVGYTVRVLPRHPMLAASNELGLVTLA.

Position 618 is an N6-(pyridoxal phosphate)lysine (Lys618).

This sequence belongs to the glycogen phosphorylase family. Pyridoxal 5'-phosphate is required as a cofactor.

It catalyses the reaction [(1-&gt;4)-alpha-D-glucosyl](n) + phosphate = [(1-&gt;4)-alpha-D-glucosyl](n-1) + alpha-D-glucose 1-phosphate. In terms of biological role, phosphorylase is an important allosteric enzyme in carbohydrate metabolism. Enzymes from different sources differ in their regulatory mechanisms and in their natural substrates. However, all known phosphorylases share catalytic and structural properties. The chain is Glycogen phosphorylase (glgP) from Mycobacterium bovis (strain ATCC BAA-935 / AF2122/97).